The chain runs to 98 residues: ATP synthase subunit c (98 aa).

Helical transmembrane passes span 27-47 and 73-93; these read ALAL…GLGL and IIGA…FFVV.

This sequence belongs to the ATPase C chain family. In terms of assembly, F-type ATPases have 2 components, F(1) - the catalytic core - and F(0) - the membrane proton channel. F(1) has five subunits: alpha(3), beta(3), gamma(1), delta(1), epsilon(1). F(0) has three main subunits: a(1), b(2) and c(10-14). The alpha and beta chains form an alternating ring which encloses part of the gamma chain. F(1) is attached to F(0) by a central stalk formed by the gamma and epsilon chains, while a peripheral stalk is formed by the delta and b chains.

It localises to the cell inner membrane. Functionally, f(1)F(0) ATP synthase produces ATP from ADP in the presence of a proton or sodium gradient. F-type ATPases consist of two structural domains, F(1) containing the extramembraneous catalytic core and F(0) containing the membrane proton channel, linked together by a central stalk and a peripheral stalk. During catalysis, ATP synthesis in the catalytic domain of F(1) is coupled via a rotary mechanism of the central stalk subunits to proton translocation. Key component of the F(0) channel; it plays a direct role in translocation across the membrane. A homomeric c-ring of between 10-14 subunits forms the central stalk rotor element with the F(1) delta and epsilon subunits. The sequence is that of ATP synthase subunit c from Protochlamydia amoebophila (strain UWE25).